Here is a 276-residue protein sequence, read N- to C-terminus: Phosphatidylglycerol--prolipoprotein diacylglyceryl transferase (276 aa).

The next 7 membrane-spanning stretches (helical) occupy residues 17–37, 59–79, 95–115, 129–149, 176–196, 202–222, and 237–257; these read LAIR…LWFG, MLFF…VLFY, WEGG…MWLF, FIAP…FING, SQLY…WLFA, MGAV…AAEF, and LSMG…MVVW. Residue R142 coordinates a 1,2-diacyl-sn-glycero-3-phospho-(1'-sn-glycerol).

This sequence belongs to the Lgt family.

It localises to the cell inner membrane. It catalyses the reaction L-cysteinyl-[prolipoprotein] + a 1,2-diacyl-sn-glycero-3-phospho-(1'-sn-glycerol) = an S-1,2-diacyl-sn-glyceryl-L-cysteinyl-[prolipoprotein] + sn-glycerol 1-phosphate + H(+). The protein operates within protein modification; lipoprotein biosynthesis (diacylglyceryl transfer). Functionally, catalyzes the transfer of the diacylglyceryl group from phosphatidylglycerol to the sulfhydryl group of the N-terminal cysteine of a prolipoprotein, the first step in the formation of mature lipoproteins. The chain is Phosphatidylglycerol--prolipoprotein diacylglyceryl transferase from Cupriavidus pinatubonensis (strain JMP 134 / LMG 1197) (Cupriavidus necator (strain JMP 134)).